A 258-amino-acid chain; its full sequence is MMNPLIIKLGGVLLDSEEALERLFSALVNYRESHQRPLVIVHGGGCVVDELMKGLNLPVKKKNGLRVTPADQIDIITGALAGTANKTLLAWAKKHQIAAVGLFLGDGDSVKVTQLDEELGHVGLAQPGSPKLINTLLENGYLPVVSSIGVTDEGQLMNVNADQAATALAATLGADLILLSDVSGILDGKGQRIAEMTAAKAEQLIEQGIITDGMIVKVNAALDAARTLGRPVDIASWRHAEQLPALFNGMPMGTRILV.

Residues 44–45 (GG), R66, and N158 each bind substrate. Residues 181–186 (DVSGIL) and 209–211 (IIT) each bind ATP.

The protein belongs to the acetylglutamate kinase family. ArgB subfamily. In terms of assembly, homodimer.

The protein resides in the cytoplasm. It carries out the reaction N-acetyl-L-glutamate + ATP = N-acetyl-L-glutamyl 5-phosphate + ADP. Its pathway is amino-acid biosynthesis; L-arginine biosynthesis; N(2)-acetyl-L-ornithine from L-glutamate: step 2/4. In terms of biological role, catalyzes the ATP-dependent phosphorylation of N-acetyl-L-glutamate. In Shigella dysenteriae serotype 1 (strain Sd197), this protein is Acetylglutamate kinase.